Reading from the N-terminus, the 443-residue chain is Intermediate filament protein ifd-2 (443 aa).

The head stretch occupies residues 1-58 (MTDPLNPTRLQNHPALARIIESGRTNLPTGITTSGALSAYAQNAAAIIRDNREREKVE). The IF rod domain occupies 55–405 (EKVEIADLNN…KLMENAEHLR (351 aa)). Residues 59–90 (IADLNNRLARYVEKVRFLEAQNRVLENDIGVF) form a coil 1A region. Positions 91–104 (RNAAHTHSERIAVY) are linker 1. Residues 105–239 (FESEKASLFT…SQHDIAIREE (135 aa)) form a coil 1B region. Residues 240–257 (ISKARRDTTNKNRDYFHN) form a linker 12 region. Positions 258 to 403 (ELHAAMKEIR…YRKLMENAEH (146 aa)) are coil 2. The interval 404-443 (LRTTVQTHVTYNAPPPPLPQSGPRTTSYHAYGSAYNDSLL) is tail.

This sequence belongs to the intermediate filament family.

The protein localises to the cytoplasm. In terms of biological role, cytoplasmic intermediate filaments provide mechanical strength to cells. Not essential protein. The protein is Intermediate filament protein ifd-2 (ifd-2) of Caenorhabditis elegans.